The sequence spans 318 residues: ADP-L-glycero-D-manno-heptose-6-epimerase (318 aa).

NADP(+)-binding positions include 10–11 (FI), 31–32 (DN), lysine 38, lysine 53, 76–80 (QGACS), and asparagine 93. Tyrosine 141 functions as the Proton acceptor in the catalytic mechanism. Residue lysine 145 coordinates NADP(+). Residue asparagine 172 participates in substrate binding. Positions 173 and 181 each coordinate NADP(+). The Proton acceptor role is filled by lysine 181. Substrate contacts are provided by residues arginine 183, histidine 190, 204–207 (FEGS), arginine 212, and tyrosine 276.

Belongs to the NAD(P)-dependent epimerase/dehydratase family. HldD subfamily. As to quaternary structure, homopentamer. The cofactor is NADP(+).

It catalyses the reaction ADP-D-glycero-beta-D-manno-heptose = ADP-L-glycero-beta-D-manno-heptose. It functions in the pathway nucleotide-sugar biosynthesis; ADP-L-glycero-beta-D-manno-heptose biosynthesis; ADP-L-glycero-beta-D-manno-heptose from D-glycero-beta-D-manno-heptose 7-phosphate: step 4/4. Functionally, catalyzes the interconversion between ADP-D-glycero-beta-D-manno-heptose and ADP-L-glycero-beta-D-manno-heptose via an epimerization at carbon 6 of the heptose. The polypeptide is ADP-L-glycero-D-manno-heptose-6-epimerase (Brachyspira hyodysenteriae (strain ATCC 49526 / WA1)).